The sequence spans 320 residues: Cytochrome f (320 aa).

The N-terminal stretch at 1-35 (MQTRNTFSWIREEITRSISVSLIIYIITWASISSA) is a signal peptide. Positions 36, 56, 59, and 60 each coordinate heme. A helical membrane pass occupies residues 286–305 (VQGLLFFLGSVVLAQIFLVL).

It belongs to the cytochrome f family. In terms of assembly, the 4 large subunits of the cytochrome b6-f complex are cytochrome b6, subunit IV (17 kDa polypeptide, petD), cytochrome f and the Rieske protein, while the 4 small subunits are PetG, PetL, PetM and PetN. The complex functions as a dimer. Heme serves as cofactor.

It is found in the plastid. Its subcellular location is the chloroplast thylakoid membrane. In terms of biological role, component of the cytochrome b6-f complex, which mediates electron transfer between photosystem II (PSII) and photosystem I (PSI), cyclic electron flow around PSI, and state transitions. The sequence is that of Cytochrome f (petA) from Arabidopsis thaliana (Mouse-ear cress).